Consider the following 175-residue polypeptide: MGRTLANKQDIVTELKGLVDEAQMAFVVDYQGLTVAEITDLRNRLEASNSVCKVTKNTLMRRAIADADDWQPLTELLKGTNAFVLVKDDPGSAIKAYQAFQKDTKKTELRGGLLEGRLLSSDELKAIGDLPSKEVLIAQIAGAINGVATKLAVGIKEVPNSLARGIKAVSEQTDA.

It belongs to the universal ribosomal protein uL10 family. As to quaternary structure, part of the ribosomal stalk of the 50S ribosomal subunit. The N-terminus interacts with L11 and the large rRNA to form the base of the stalk. The C-terminus forms an elongated spine to which L12 dimers bind in a sequential fashion forming a multimeric L10(L12)X complex.

Functionally, forms part of the ribosomal stalk, playing a central role in the interaction of the ribosome with GTP-bound translation factors. The protein is Large ribosomal subunit protein uL10 of Synechococcus elongatus (strain ATCC 33912 / PCC 7942 / FACHB-805) (Anacystis nidulans R2).